A 225-amino-acid chain; its full sequence is Uracil-DNA glycosylase (225 aa).

Asp-65 serves as the catalytic Proton acceptor.

Belongs to the uracil-DNA glycosylase (UDG) superfamily. UNG family.

Its subcellular location is the cytoplasm. It catalyses the reaction Hydrolyzes single-stranded DNA or mismatched double-stranded DNA and polynucleotides, releasing free uracil.. Its function is as follows. Excises uracil residues from the DNA which can arise as a result of misincorporation of dUMP residues by DNA polymerase or due to deamination of cytosine. The polypeptide is Uracil-DNA glycosylase (Clostridium perfringens (strain ATCC 13124 / DSM 756 / JCM 1290 / NCIMB 6125 / NCTC 8237 / Type A)).